A 693-amino-acid chain; its full sequence is MTTSFGAAINIAVADDPNPKLQIHNFSGLKSTSNSLLLSRRLHVFQSFSPSNPSSIVRAVSTPAKPAAVEPKRSKVEIFKEQSNFIRYPLNEEILNDAPNINEAATQLIKFHGSYMQYDRDERGGRSYSFMLRTKNPGGEVPNRLYLVMDDLADQFGIGTLRLTTRQTFQLHGVLKKNLKTVMSTIIKNMGSTLGACGDLNRNVLAPAAPFAKKDYMFAKQTADNIAALLTPQSGFYYDVWVDGEKVMTAEPPEVVKARNDNSHGTNFPDSPEPIYGTQFLPRKFKIAVTVPTDNSVDIFTNDIGVVVVSNEDGEPQGFNIYVGGGMGRTHRMETTFPRLAEPLGYVPKEDILYAVKAIVVTQRENGRRDDRRYSRLKYLLSSWGIEKFRSVTEQYYGKKFQPCRELPEWEFKSYLGWHEAGDGSLFCGLHVDNGRVKGAMKKALREVIEKYNLNVRLTPNQNIILCNIRQAWKRPITTVLAQGGLLQPRYVDPLNLTAMACPAFPLCPLAITEAERGIPDILKRVRAIFERVGLKYSESVVIRITGCPNGCARPYMAELGLVGDGPNSYQIWLGGTPNQTSLAKTFKDKLKVQDLEKVLEPLFFHWRRKRQSKESFGDFTNRMGFEKLGEFVEKWEGIPESSSRYNLKLFADRETYEAMDALASIQDKNAHQLAIEVVRNYVASQQNGKSMD.

The N-terminal 62 residues, 1-62, are a transit peptide targeting the chloroplast; the sequence is MTTSFGAAIN…PSSIVRAVST (62 aa). [4Fe-4S] cluster is bound by residues Cys-502, Cys-508, Cys-548, and Cys-552. Residue Cys-552 coordinates siroheme.

The protein belongs to the nitrite and sulfite reductase 4Fe-4S domain family. In terms of assembly, monomer. Interacts with ferredoxin. The cofactor is siroheme. It depends on [4Fe-4S] cluster as a cofactor. Post-translationally, phosphorylated; this phosphorylation reduces DNA-binding. Expressed in leaves, stems, roots and petals.

Its subcellular location is the plastid. It is found in the chloroplast stroma. The protein localises to the chloroplast nucleoid. The protein resides in the plastid stroma. It catalyses the reaction hydrogen sulfide + 6 oxidized [2Fe-2S]-[ferredoxin] + 3 H2O = sulfite + 6 reduced [2Fe-2S]-[ferredoxin] + 7 H(+). In terms of biological role, essential protein with sulfite reductase activity required in assimilatory sulfate reduction pathway during both primary and secondary metabolism and thus involved in development and growth. DNA-binding protein that binds to both double-stranded and single-stranded DNA without significant sequence specificity to reversibly repress the transcriptional activity of chloroplast nucleoids by promoting DNA compaction and possibly regulate DNA replication. The sequence is that of Sulfite reductase 1 [ferredoxin], chloroplastic (SIR1) from Nicotiana tabacum (Common tobacco).